Here is a 319-residue protein sequence, read N- to C-terminus: Acetyl esterase (319 aa).

The Involved in the stabilization of the negatively charged intermediate by the formation of the oxyanion hole motif lies at 91 to 93 (HGG). Catalysis depends on residues Ser165, Asp262, and His292.

It belongs to the 'GDXG' lipolytic enzyme family. In terms of assembly, homodimer. Interacts with MalT and MelA.

The protein localises to the cytoplasm. Functionally, displays esterase activity towards short chain fatty esters (acyl chain length of up to 8 carbons). Able to hydrolyze triacetylglycerol (triacetin) and tributyrylglycerol (tributyrin), but not trioleylglycerol (triolein) or cholesterol oleate. Negatively regulates MalT activity by antagonizing maltotriose binding. Inhibits MelA galactosidase activity. This is Acetyl esterase from Escherichia coli O157:H7.